Reading from the N-terminus, the 1149-residue chain is ATP-dependent helicase/deoxyribonuclease subunit B (1149 aa).

Residue 8-15 coordinates ATP; the sequence is GRAGTGKT. Residues C784, C1102, C1105, and C1111 each contribute to the [4Fe-4S] cluster site.

The protein belongs to the helicase family. AddB/RexB type 1 subfamily. Heterodimer of AddA and AddB. Requires Mg(2+) as cofactor. It depends on [4Fe-4S] cluster as a cofactor.

The heterodimer acts as both an ATP-dependent DNA helicase and an ATP-dependent, dual-direction single-stranded exonuclease. Recognizes the chi site generating a DNA molecule suitable for the initiation of homologous recombination. The AddB subunit has 5' -&gt; 3' nuclease activity but not helicase activity. The chain is ATP-dependent helicase/deoxyribonuclease subunit B from Thermoanaerobacter pseudethanolicus (strain ATCC 33223 / 39E) (Clostridium thermohydrosulfuricum).